A 125-amino-acid polypeptide reads, in one-letter code: Nuclear envelope phosphatase-regulatory subunit 1 (125 aa).

N-acetylmethionine is present on M1. 2 consecutive transmembrane segments (helical) span residues 33-53 and 65-85; these read MLLI…LIDP and WNHP…FAGI.

It belongs to the CNEP1R1 family. As to quaternary structure, interacts with CTDNEP1; the complex dephosphorylates LPIN1 and LPIN2.

It is found in the nucleus membrane. Its subcellular location is the cytoplasm. In terms of biological role, forms with the serine/threonine protein phosphatase CTDNEP1 an active complex which dephosphorylates and may activate LPIN1 and LPIN2. LPIN1 and LPIN2 are phosphatidate phosphatases that catalyze the conversion of phosphatidic acid to diacylglycerol and control the metabolism of fatty acids at different levels. May indirectly modulate the lipid composition of nuclear and/or endoplasmic reticulum membranes and be required for proper nuclear membrane morphology and/or dynamics. May also indirectly regulate the production of lipid droplets and triacylglycerol. This Bos taurus (Bovine) protein is Nuclear envelope phosphatase-regulatory subunit 1 (CNEP1R1).